The chain runs to 132 residues: Small ribosomal subunit protein uS8 (132 aa).

Belongs to the universal ribosomal protein uS8 family. Part of the 30S ribosomal subunit. Contacts proteins S5 and S12.

Functionally, one of the primary rRNA binding proteins, it binds directly to 16S rRNA central domain where it helps coordinate assembly of the platform of the 30S subunit. In Kocuria rhizophila (strain ATCC 9341 / DSM 348 / NBRC 103217 / DC2201), this protein is Small ribosomal subunit protein uS8.